The sequence spans 130 residues: Small ribosomal subunit protein uS9 (130 aa).

Belongs to the universal ribosomal protein uS9 family.

The chain is Small ribosomal subunit protein uS9 from Acidovorax ebreus (strain TPSY) (Diaphorobacter sp. (strain TPSY)).